Reading from the N-terminus, the 260-residue chain is tRNA (guanine-N(7)-)-methyltransferase (260 aa).

Positions 1–37 are disordered; sequence MIHDPNDAGLPDQLPTPSSEAENSPAGDTTPPEEALH. S-adenosyl-L-methionine contacts are provided by glutamate 90, glutamate 115, aspartate 142, and aspartate 165. The active site involves aspartate 165. Substrate-binding positions include lysine 169, aspartate 201, and 236–239; that span reads TKFE.

This sequence belongs to the class I-like SAM-binding methyltransferase superfamily. TrmB family.

The enzyme catalyses guanosine(46) in tRNA + S-adenosyl-L-methionine = N(7)-methylguanosine(46) in tRNA + S-adenosyl-L-homocysteine. The protein operates within tRNA modification; N(7)-methylguanine-tRNA biosynthesis. Catalyzes the formation of N(7)-methylguanine at position 46 (m7G46) in tRNA. The chain is tRNA (guanine-N(7)-)-methyltransferase from Paraburkholderia xenovorans (strain LB400).